Here is a 505-residue protein sequence, read N- to C-terminus: Probable folylpolyglutamate synthase (505 aa).

Residue 89 to 92 participates in ATP binding; that stretch reads GKGS. 3 residues coordinate Mg(2+): S121, E190, and H218. 2 residues coordinate ATP: R332 and D346.

The protein belongs to the folylpolyglutamate synthase family. Requires a monovalent cation as cofactor.

The protein resides in the mitochondrion inner membrane. It is found in the mitochondrion matrix. The protein localises to the cytoplasm. The catalysed reaction is (6S)-5,6,7,8-tetrahydrofolyl-(gamma-L-Glu)(n) + L-glutamate + ATP = (6S)-5,6,7,8-tetrahydrofolyl-(gamma-L-Glu)(n+1) + ADP + phosphate + H(+). Its pathway is cofactor biosynthesis; tetrahydrofolylpolyglutamate biosynthesis. Catalyzes conversion of folates to polyglutamate derivatives allowing concentration of folate compounds in the cell and the intracellular retention of these cofactors, which are important substrates for most of the folate-dependent enzymes that are involved in one-carbon transfer reactions involved in purine, pyrimidine and amino acid synthesis. The polypeptide is Probable folylpolyglutamate synthase (met7) (Schizosaccharomyces pombe (strain 972 / ATCC 24843) (Fission yeast)).